The sequence spans 294 residues: MDVAEENSEEALLIKQQRKEKKEVQAKIQCMKNSVPKNDKKRRKQMTEDIAKLEAEVEARHKEELEALAQKPTEPTQVSSITNGVTSLDLGSEEPVQQPRVSKAQKRREKKAAQEKERDDRIAEAEIANLSGARHLESQKLAQILAERELQIRQIPSDGHCMYRAIEHQLNEQGNSLTVANLRSQTADYMQKRAEDFLPFLTNSSTGDMYTQEEFQKYCTDIVNTPAWGGQLELRALSHILKTPIEVIQAESLPIVIGEEYSNKPITLVYMRHAYGLGEHYNSVEQLDTSTENS.

The segment at 85–120 (VTSLDLGSEEPVQQPRVSKAQKRREKKAAQEKERDD) is disordered. Over residues 111-120 (KAAQEKERDD) the composition is skewed to basic and acidic residues. Residues 150 to 287 (LQIRQIPSDG…GEHYNSVEQL (138 aa)) form the OTU domain. The segment at 155–161 (IPSDGHC) is cys-loop. The active site involves D158. The Nucleophile role is filled by C161. A variable-loop region spans residues 222-232 (IVNTPAWGGQL). The segment at 270–280 (YMRHAYGLGEH) is his-loop. H280 is an active-site residue.

It catalyses the reaction Thiol-dependent hydrolysis of ester, thioester, amide, peptide and isopeptide bonds formed by the C-terminal Gly of ubiquitin (a 76-residue protein attached to proteins as an intracellular targeting signal).. In terms of biological role, deubiquitinating enzyme that may play a role in the ubiquitin-dependent regulation of different cellular processes. The sequence is that of Deubiquitinase OTUD6B (otud6b) from Xenopus laevis (African clawed frog).